Here is a 250-residue protein sequence, read N- to C-terminus: Endomucin (250 aa).

A signal peptide spans 1-20; sequence MRLLQVTALFFLLSNSLCRG. Composition is skewed to low complexity over residues 24–38 and 45–60; these read KALT…SATT and TNKS…TTNS. Disordered stretches follow at residues 24-83 and 105-153; these read KALT…ETTT and NAVS…LTTA. N-linked (GlcNAc...) asparagine glycans are attached at residues Asn46, Asn115, and Asn119. Polar residues-rich tracts occupy residues 105-135 and 143-153; these read NAVS…NQLP and TETPSASLTTA. The chain crosses the membrane as a helical span at residues 180 to 200; it reads VILPVVIALIVITVLVFTLVG. Residues 210–250 are disordered; sequence PGTPESGNDQPQSDKESVKLLTVKTISHESGEHSAQGKAKN. Residue Ser226 is modified to Phosphoserine.

Post-translationally, highly O-glycosylated. Sialic acid-rich glycoprotein.

It localises to the membrane. In terms of biological role, endothelial sialomucin, also called endomucin or mucin-like sialoglycoprotein, which interferes with the assembly of focal adhesion complexes and inhibits interaction between cells and the extracellular matrix. This Rattus norvegicus (Rat) protein is Endomucin (Emcn).